Consider the following 1062-residue polypeptide: 3-hydroxy-3-methylglutaryl-coenzyme A reductase 2 (1062 aa).

At 1–34 (MAPTNTKDSDTPGWLHRHGTSVLGSVARQACKQP) the chain is on the cytoplasmic side. The chain crosses the membrane as a helical span at residues 35–55 (IYTLVITALLATMTYTSLLEG). The Lumenal portion of the chain corresponds to 56–230 (SLYNANLTRL…SFVGLIKHAQ (175 aa)). N61 carries an N-linked (GlcNAc...) asparagine glycan. Residues 231–251 (IIDIIIMLLAYLAMHLTFLSL) form a helical membrane-spanning segment. One can recognise an SSD domain in the interval 233–403 (DIIIMLLAYL…FTFYISVLCV (171 aa)). The Cytoplasmic portion of the chain corresponds to 252 to 261 (FMSMRQLGSR). The helical transmembrane segment at 262–282 (FWLAYSVLLSGFFSLFFGLKV) threads the bilayer. The Lumenal portion of the chain corresponds to 283 to 287 (TTSSG). Residues 288–308 (VSTSMITLSECLPILVIIVGF) traverse the membrane as a helical segment. The Cytoplasmic portion of the chain corresponds to 309-355 (EKPIRLTRAVLRAATESYLPAKPMARRSTPEAIEVAIMREGWRIVRD). Residues 356 to 375 (YAIEIAILAAGATSRVQGAL) form a helical membrane-spanning segment. At 376–377 (PQ) the chain is on the lumenal side. The helical transmembrane segment at 378–398 (FCFLAAWILLFDSLLLFTFYI) threads the bilayer. The Cytoplasmic portion of the chain corresponds to 399 to 450 (SVLCVKLEITRIRKHVEPRRALEDDDISTGNQDFDSRVFGCKVKAANISRFK). The chain crosses the membrane as a helical span at residues 451-471 (FLMVGGFVLFNVLQLSSLTYG). Residues 472–564 (NVRVSDWMPY…GCVLAWLEDP (93 aa)) are Lumenal-facing. Residue N484 is glycosylated (N-linked (GlcNAc...) asparagine). A helical transmembrane segment spans residues 565–585 (VISKWVIAALFLSLVLNSYLM). At 586 to 1062 (KAARWNLRQS…NRSKVAAKTG (477 aa)) the chain is on the cytoplasmic side. The active-site Charge relay system is the E744. 750 to 756 (SASRGCK) lines the CoA pocket. NADP(+) contacts are provided by residues 811-813 (SRF) and 838-846 (DAMGMNMIS). Residue K877 is the Charge relay system of the active site. 906–908 (VLK) lines the CoA pocket. D953 (charge relay system) is an active-site residue. 1048 to 1049 (AH) contributes to the CoA binding site. H1049 serves as the catalytic Proton donor. 1053–1054 (NR) lines the NADP(+) pocket.

The protein belongs to the HMG-CoA reductase family.

It is found in the endoplasmic reticulum membrane. It carries out the reaction (R)-mevalonate + 2 NADP(+) + CoA = (3S)-3-hydroxy-3-methylglutaryl-CoA + 2 NADPH + 2 H(+). It functions in the pathway metabolic intermediate biosynthesis; (R)-mevalonate biosynthesis; (R)-mevalonate from acetyl-CoA: step 3/3. In terms of biological role, HMG-CoA reductase; part of the first module of ergosterol biosynthesis pathway that includes the early steps of the pathway, conserved across all eukaryotes, and which results in the formation of mevalonate from acetyl-coenzyme A (acetyl-CoA). Hmg1 and hmg2 catalyze the reduction of hydroxymethylglutaryl-CoA (HMG-CoA) to mevalonate. The first module starts with the action of the cytosolic acetyl-CoA acetyltransferase erg10B that catalyzes the formation of acetoacetyl-CoA. The hydroxymethylglutaryl-CoA synthases erg13A and erg13B then condense acetyl-CoA with acetoacetyl-CoA to form HMG-CoA. The rate-limiting step of the early module is the reduction to mevalonate by the 3-hydroxy-3-methylglutaryl-coenzyme A (HMG-CoA) reductases hmg1 and hmg2. Mevalonate is also a precursor for the extracellular siderophore triacetylfusarinine C (TAFC). The polypeptide is 3-hydroxy-3-methylglutaryl-coenzyme A reductase 2 (Aspergillus fumigatus (strain ATCC MYA-4609 / CBS 101355 / FGSC A1100 / Af293) (Neosartorya fumigata)).